The sequence spans 98 residues: Large ribosomal subunit protein bL28 (98 aa).

Belongs to the bacterial ribosomal protein bL28 family.

This chain is Large ribosomal subunit protein bL28, found in Rhizobium etli (strain ATCC 51251 / DSM 11541 / JCM 21823 / NBRC 15573 / CFN 42).